The chain runs to 449 residues: Trigger factor (449 aa).

The PPIase FKBP-type domain maps to 162 to 242 (GDFVTIDMTV…VRAVREKQVP (81 aa)). Positions 428–449 (APVNLEGGSTPAAEAEPAVSEA) are disordered. Low complexity predominate over residues 438–449 (PAAEAEPAVSEA).

The protein belongs to the FKBP-type PPIase family. Tig subfamily.

The protein localises to the cytoplasm. It carries out the reaction [protein]-peptidylproline (omega=180) = [protein]-peptidylproline (omega=0). Involved in protein export. Acts as a chaperone by maintaining the newly synthesized protein in an open conformation. Functions as a peptidyl-prolyl cis-trans isomerase. The protein is Trigger factor of Acidothermus cellulolyticus (strain ATCC 43068 / DSM 8971 / 11B).